A 463-amino-acid polypeptide reads, in one-letter code: Senescence/dehydration-associated protein At3g51250 (463 aa).

Residues 1–12 (MNPSHGGDDKQR) show a composition bias toward basic and acidic residues. Disordered regions lie at residues 1 to 31 (MNPSHGGDDKQRPAMYPQVDQSIPDNPFAST), 52 to 74 (PNLFPDHGDASNDQSPSAPPQAT), and 146 to 172 (IHPPKEKGQGSGSDSDDEQGQKSKSKS). Residues 19-31 (VDQSIPDNPFAST) are compositionally biased toward polar residues. The Senescence domain maps to 269-437 (IASGSGKLIR…AWVAFKIRKA (169 aa)).

In Arabidopsis thaliana (Mouse-ear cress), this protein is Senescence/dehydration-associated protein At3g51250.